The following is a 149-amino-acid chain: General odorant-binding protein 57c (149 aa).

The first 16 residues, 1-16 (MLKLWLICILTVSVVS), serve as a signal peptide directing secretion. 3 disulfide bridges follow: cysteine 32/cysteine 70, cysteine 66/cysteine 117, and cysteine 106/cysteine 126.

The protein belongs to the PBP/GOBP family.

In terms of biological role, present in the aqueous fluid surrounding olfactory sensory dendrites and are thought to aid in the capture and transport of hydrophobic odorants into and through this fluid. This chain is General odorant-binding protein 57c, found in Drosophila melanogaster (Fruit fly).